Reading from the N-terminus, the 275-residue chain is MATYLIGDLHGCYDEFQMLLERVRFDPAQDTLYLTGDLLARGDNSLACLRLVKSLGNAARTVLANHDLHFISTALGVKKIKPRDRVDAIFAAEDFFELVNWLRCQPLLIHNPAQNFVLVHAGISPDWDLTAAKVCANEVENVLRHGNYRYLVENMYAEQPDRWSPHLQGLDRLRYSINVLTRMRFCYLDHRLDFACKLSIKDAPKALAPWFALDNPLYQTGNIVFGHWASLVDETTPPNIYGLDTGCVWGNRLTMLRWEDKQYFTQSAVKKSNAF.

This sequence belongs to the Ap4A hydrolase family.

The enzyme catalyses P(1),P(4)-bis(5'-adenosyl) tetraphosphate + H2O = 2 ADP + 2 H(+). Functionally, hydrolyzes diadenosine 5',5'''-P1,P4-tetraphosphate to yield ADP. In Aggregatibacter actinomycetemcomitans (Actinobacillus actinomycetemcomitans), this protein is Bis(5'-nucleosyl)-tetraphosphatase, symmetrical (apaH).